Consider the following 337-residue polypeptide: Anthranilate phosphoribosyltransferase (337 aa).

Residues glycine 81, 84–85 (GD), threonine 89, 91–94 (NIST), 109–117 (KHGNRALSS), and threonine 121 contribute to the 5-phospho-alpha-D-ribose 1-diphosphate site. Position 81 (glycine 81) interacts with anthranilate. Residue serine 93 participates in Mg(2+) binding. Asparagine 112 serves as a coordination point for anthranilate. Arginine 167 provides a ligand contact to anthranilate. Residues aspartate 225 and glutamate 226 each contribute to the Mg(2+) site.

The protein belongs to the anthranilate phosphoribosyltransferase family. Homodimer. Mg(2+) is required as a cofactor.

The catalysed reaction is N-(5-phospho-beta-D-ribosyl)anthranilate + diphosphate = 5-phospho-alpha-D-ribose 1-diphosphate + anthranilate. It participates in amino-acid biosynthesis; L-tryptophan biosynthesis; L-tryptophan from chorismate: step 2/5. In terms of biological role, catalyzes the transfer of the phosphoribosyl group of 5-phosphorylribose-1-pyrophosphate (PRPP) to anthranilate to yield N-(5'-phosphoribosyl)-anthranilate (PRA). The polypeptide is Anthranilate phosphoribosyltransferase (Rhizobium meliloti (strain 1021) (Ensifer meliloti)).